Here is a 189-residue protein sequence, read N- to C-terminus: Potassium-transporting ATPase KdpC subunit (189 aa).

The helical transmembrane segment at 11–31 (LFVLLTVITGVLYPVFVTGLA) threads the bilayer.

The protein belongs to the KdpC family. As to quaternary structure, the system is composed of three essential subunits: KdpA, KdpB and KdpC.

The protein resides in the cell inner membrane. Part of the high-affinity ATP-driven potassium transport (or Kdp) system, which catalyzes the hydrolysis of ATP coupled with the electrogenic transport of potassium into the cytoplasm. This subunit acts as a catalytic chaperone that increases the ATP-binding affinity of the ATP-hydrolyzing subunit KdpB by the formation of a transient KdpB/KdpC/ATP ternary complex. The sequence is that of Potassium-transporting ATPase KdpC subunit from Polynucleobacter asymbioticus (strain DSM 18221 / CIP 109841 / QLW-P1DMWA-1) (Polynucleobacter necessarius subsp. asymbioticus).